A 380-amino-acid chain; its full sequence is Histidinol-phosphate aminotransferase 1 (380 aa).

N6-(pyridoxal phosphate)lysine is present on lysine 235.

Belongs to the class-II pyridoxal-phosphate-dependent aminotransferase family. Histidinol-phosphate aminotransferase subfamily. As to quaternary structure, homodimer. Requires pyridoxal 5'-phosphate as cofactor.

It catalyses the reaction L-histidinol phosphate + 2-oxoglutarate = 3-(imidazol-4-yl)-2-oxopropyl phosphate + L-glutamate. It functions in the pathway amino-acid biosynthesis; L-histidine biosynthesis; L-histidine from 5-phospho-alpha-D-ribose 1-diphosphate: step 7/9. This is Histidinol-phosphate aminotransferase 1 from Psychrobacter arcticus (strain DSM 17307 / VKM B-2377 / 273-4).